Reading from the N-terminus, the 63-residue chain is Large ribosomal subunit protein bL28 (63 aa).

This sequence belongs to the bacterial ribosomal protein bL28 family.

The sequence is that of Large ribosomal subunit protein bL28 from Citrifermentans bemidjiense (strain ATCC BAA-1014 / DSM 16622 / JCM 12645 / Bem) (Geobacter bemidjiensis).